Here is a 187-residue protein sequence, read N- to C-terminus: uncharacterized protein (187 aa).

Positions 127–172 (KQPQVTLTQLQEELDEAKTRLALKEKELLEALSEISKLRLQLSNQL) form a coiled coil.

This is an uncharacterized protein from Tomato torrado virus (isolate Solanum lycopersicum/Spain/PRIToTV0301/-) (ToTV).